Reading from the N-terminus, the 654-residue chain is Endoplasmic reticulum chaperone BiP (654 aa).

Positions 1–18 are cleaved as a signal peptide; it reads MKFPMVAAALLLLCAVRA. The required for interaction with ELAPOR1 stretch occupies residues 1 to 80; the sequence is MKFPMVAAAL…EGERLIGDAA (80 aa). 36 to 39 provides a ligand contact to ATP; the sequence is GTTY. Phosphoserine is present on Ser86. ATP is bound at residue Lys96. Position 125 is an N6-acetyllysine (Lys125). The nucleotide-binding (NBD) stretch occupies residues 125–280; it reads KPYIQVDIGG…KKKTGKDVRK (156 aa). Tyr160 carries the post-translational modification 3'-nitrotyrosine. Lys213 is modified (N6-acetyllysine). Residue 227–229 coordinates ATP; it reads GGT. The residue at position 271 (Lys271) is an N6-acetyllysine. Residue 293-300 coordinates ATP; sequence EKAKRALS. Position 326 is an N6-acetyllysine (Lys326). Lys352 participates in a covalent cross-link: Glycyl lysine isopeptide (Lys-Gly) (interchain with G-Cter in SUMO2). Lys353 is modified (N6-acetyllysine; alternate). Lys353 is covalently cross-linked (Glycyl lysine isopeptide (Lys-Gly) (interchain with G-Cter in SUMO1); alternate). 364-367 provides a ligand contact to ATP; the sequence is GSTR. Residues 409-419 form an interdomain linker region; sequence QDTGDLVLLDV. The segment at 420 to 500 is substrate-binding (SBD); the sequence is CPLTLGIETV…PRGVPQIEVT (81 aa). Position 447 is an N6-succinyllysine (Lys447). Arg492 carries the post-translational modification Omega-N-methylarginine. Thr518 is subject to O-AMP-threonine; alternate. Thr518 bears the Phosphothreonine; alternate mark. Residue Lys585 is modified to N6,N6,N6-trimethyllysine; by METTL21A; in vitro. Lys585 carries the post-translational modification N6,N6-dimethyllysine; alternate. At Lys585 the chain carries N6-methyllysine; alternate. Residue Lys591 is modified to N6-methyllysine. Positions 632 to 654 are disordered; sequence SKLYGSAGPPPTGEEDTSEKDEL. 2 positions are modified to phosphothreonine: Thr643 and Thr648. The segment covering 644-654 has biased composition (acidic residues); it reads GEEDTSEKDEL. Residue Ser649 is modified to Phosphoserine. Residues 651-654 carry the Prevents secretion from ER motif; the sequence is KDEL.

This sequence belongs to the heat shock protein 70 family. In terms of assembly, monomer and homooligomer; homooligomerization via the interdomain linker inactivates the chaperone activity and acts as a storage of HSPA5/BiP molecules. Interacts with DNAJC1 (via J domain). Component of an EIF2 complex at least composed of CELF1/CUGBP1, CALR, CALR3, EIF2S1, EIF2S2, HSP90B1 and HSPA5. Part of a large chaperone multiprotein complex comprising DNAJB11, HSP90B1, HSPA5, HYOU, PDIA2, PDIA4, PDIA6, PPIB, SDF2L1, UGGT1 and very small amounts of ERP29, but not, or at very low levels, CALR nor CANX. Interacts with TMEM132A and TRIM21. May form a complex with ERLEC1, OS9, SEL1L and SYVN1. Interacts with DNAJC10. Interacts with DNAJB9/ERdj4; leading to recruit HSPA5/BiP to ERN1/IRE1. Interacts with ERN1/IRE1 (via luminal domain); the interaction takes place following interaction with DNAJB9/ERdj4 and leads to inactivate ERN1/IRE1, the interaction also competitively inhibits ERN1 interaction with MANF. Interacts directly with MANF (via SAP domain); the interaction inhibits ATP binding to HSPA5/BiP and subsequent nucleotide exchange. Interacts with EIF2AK3/PERK (via luminal domain); interaction leads to inactivate EIF2AK3/PERK. Interacts with MX1. Interacts with METTL23. Interacts with CEMIP; the interaction induces calcium leakage from the endoplasmic reticulum and cell migration. Interacts with PCSK4 form; the interaction takes place in the endoplasmic reticulum. Interacts with CIPC. Interacts with CCDC88B (via C-terminus); the interaction opposes ERN1-mediated JNK activation, protecting against apoptosis. Interacts with INPP5K; necessary for INPP5K localization at the endoplasmic reticulum. Interacts with LOXL2; leading to activate the ERN1/IRE1-XBP1 pathway of the unfolded protein response. Interacts with CLU under stressed condition; interaction increases CLU protein stability; facilitates its retrotranslocation and redistribution to the mitochondria; cooperatively suppress stress-induced apoptosis by stabilizing mitochondrial membrane integrity. Interacts with CCDC47. Interacts with CLN3. Interacts with ELAPOR1; may regulate the function of HSPA5 in apoptosis and cell proliferation. Interacts with CASP7. Interacts with ILDR2; the interaction stabilizes ILDR2 expression. Interacts with ADAM7. In unstressed cells, AMPylation at Thr-518 by FICD inactivates the chaperome activity: AMPylated form is locked in a relatively inert state and only weakly stimulated by J domain-containing proteins. In response to endoplasmic reticulum stress, de-AMPylation by the same protein, FICD, restores the chaperone activity.

Its subcellular location is the endoplasmic reticulum lumen. The protein resides in the melanosome. It is found in the cytoplasm. It localises to the cell surface. It catalyses the reaction ATP + H2O = ADP + phosphate + H(+). The chaperone activity is regulated by ATP-induced allosteric coupling of the nucleotide-binding (NBD) and substrate-binding (SBD) domains. In the ADP-bound and nucleotide-free (apo) states, the two domains have little interaction. In contrast, in the ATP-bound state the two domains are tightly coupled, which results in drastically accelerated kinetics in both binding and release of polypeptide substrates. J domain-containing co-chaperones (DNAJB9/ERdj4 or DNAJC10/ERdj5) stimulate the ATPase activity and are required for efficient substrate recognition by HSPA5/BiP. Homooligomerization inactivates participating HSPA5/BiP protomers and probably act as reservoirs to store HSPA5/BiP molecules when they are not needed by the cell. Endoplasmic reticulum chaperone that plays a key role in protein folding and quality control in the endoplasmic reticulum lumen. Involved in the correct folding of proteins and degradation of misfolded proteins via its interaction with DNAJC10/ERdj5, probably to facilitate the release of DNAJC10/ERdj5 from its substrate. Acts as a key repressor of the EIF2AK3/PERK and ERN1/IRE1-mediated unfolded protein response (UPR). In the unstressed endoplasmic reticulum, recruited by DNAJB9/ERdj4 to the luminal region of ERN1/IRE1, leading to disrupt the dimerization of ERN1/IRE1, thereby inactivating ERN1/IRE1. Also binds and inactivates EIF2AK3/PERK in unstressed cells. Accumulation of misfolded protein in the endoplasmic reticulum causes release of HSPA5/BiP from ERN1/IRE1 and EIF2AK3/PERK, allowing their homodimerization and subsequent activation. Plays an auxiliary role in post-translational transport of small presecretory proteins across endoplasmic reticulum (ER). May function as an allosteric modulator for SEC61 channel-forming translocon complex, likely cooperating with SEC62 to enable the productive insertion of these precursors into SEC61 channel. Appears to specifically regulate translocation of precursors having inhibitory residues in their mature region that weaken channel gating. May also play a role in apoptosis and cell proliferation. This chain is Endoplasmic reticulum chaperone BiP, found in Cricetulus griseus (Chinese hamster).